Here is a 353-residue protein sequence, read N- to C-terminus: Chloroplastic lipocalin (353 aa).

Residues 1–18 (MILLSSSISLSRPVSSQS) show a composition bias toward low complexity. Positions 1 to 27 (MILLSSSISLSRPVSSQSFSPPAATST) are disordered. A chloroplast-targeting transit peptide spans 1–39 (MILLSSSISLSRPVSSQSFSPPAATSTRRSHSSVTVKCC). A disulfide bridge connects residues C163 and C299.

This sequence belongs to the calycin superfamily. Lipocalin family. In terms of tissue distribution, expressed in leaves at low levels (at protein levels). Present in seeds.

The protein resides in the plastid. It localises to the chloroplast thylakoid lumen. In terms of biological role, lipocalin that prevents thylakoidal membrane lipids peroxidation and confers protection against oxidative stress, especially mediated by singlet oxygen in response to high light and other stress (e.g. heat shocks). Required for seed longevity by ensuring polyunsaturated lipids integrity. This Arabidopsis thaliana (Mouse-ear cress) protein is Chloroplastic lipocalin.